Reading from the N-terminus, the 66-residue chain is Large ribosomal subunit protein bL33c (66 aa).

It belongs to the bacterial ribosomal protein bL33 family.

The protein resides in the plastid. The protein localises to the chloroplast. This chain is Large ribosomal subunit protein bL33c, found in Vitis vinifera (Grape).